The sequence spans 88 residues: uncharacterized protein (88 aa).

Residues 1–22 (MGLTLKEHAEVCMALAESSASA) form the signal peptide.

This is an uncharacterized protein from Haemophilus influenzae (strain ATCC 51907 / DSM 11121 / KW20 / Rd).